Here is a 209-residue protein sequence, read N- to C-terminus: Small ribosomal subunit protein uS3 (209 aa).

Residues I38–K107 form the KH type-2 domain.

Belongs to the universal ribosomal protein uS3 family. In terms of assembly, part of the 30S ribosomal subunit. Forms a tight complex with proteins S10 and S14.

Binds the lower part of the 30S subunit head. Binds mRNA in the 70S ribosome, positioning it for translation. The protein is Small ribosomal subunit protein uS3 of Pseudothermotoga lettingae (strain ATCC BAA-301 / DSM 14385 / NBRC 107922 / TMO) (Thermotoga lettingae).